Here is a 612-residue protein sequence, read N- to C-terminus: Cyclin-dependent kinase 8 (612 aa).

Residues 23–345 (FENSKEIGRG…CEEAMNDIYF (323 aa)) enclose the Protein kinase domain. ATP is bound by residues 29–37 (IGRGTYGLV) and K57. The active-site Proton acceptor is the D155. 5 stretches are compositionally biased toward low complexity: residues 403–455 (QQQM…MGQP), 472–483 (HQMMQQQHQSQH), 543–555 (PQPG…QQRP), 564–573 (QGYMNPQMGM), and 600–612 (NPQQ…QYHR). 2 disordered regions span residues 403–483 (QQQM…QSQH) and 543–612 (PQPG…QYHR).

Belongs to the protein kinase superfamily. CMGC Ser/Thr protein kinase family. CDC2/CDKX subfamily. As to quaternary structure, component of the Mediator complex. Mg(2+) is required as a cofactor.

The protein resides in the nucleus. The catalysed reaction is L-seryl-[protein] + ATP = O-phospho-L-seryl-[protein] + ADP + H(+). It catalyses the reaction L-threonyl-[protein] + ATP = O-phospho-L-threonyl-[protein] + ADP + H(+). It carries out the reaction [DNA-directed RNA polymerase] + ATP = phospho-[DNA-directed RNA polymerase] + ADP + H(+). Its function is as follows. Component of the Mediator complex, a coactivator involved in regulated gene transcription of nearly all RNA polymerase II-dependent genes. Mediator functions as a bridge to convey information from gene-specific regulatory proteins to the basal RNA polymerase II transcription machinery. Mediator is recruited to promoters by direct interactions with regulatory proteins and serves as a scaffold for the assembly of a functional pre-initiation complex with RNA polymerase II and the general transcription factors. Phosphorylates the CTD (C-terminal domain) of the large subunit of RNA polymerase II (RNAp II), which may inhibit the formation of a transcription initiation complex. The sequence is that of Cyclin-dependent kinase 8 (cdk-8) from Caenorhabditis briggsae.